The primary structure comprises 290 residues: Ribosomal RNA small subunit methyltransferase H (290 aa).

S-adenosyl-L-methionine is bound by residues 35-37 (GGH), Asp-54, Phe-81, Asp-97, and Gln-104.

The protein belongs to the methyltransferase superfamily. RsmH family.

It localises to the cytoplasm. The enzyme catalyses cytidine(1402) in 16S rRNA + S-adenosyl-L-methionine = N(4)-methylcytidine(1402) in 16S rRNA + S-adenosyl-L-homocysteine + H(+). Its function is as follows. Specifically methylates the N4 position of cytidine in position 1402 (C1402) of 16S rRNA. In Picosynechococcus sp. (strain ATCC 27264 / PCC 7002 / PR-6) (Agmenellum quadruplicatum), this protein is Ribosomal RNA small subunit methyltransferase H.